A 237-amino-acid chain; its full sequence is Lectin alpha chain (237 aa).

2 residues coordinate Mn(2+): E8 and D10. Ca(2+) contacts are provided by D10, Y12, N14, and D19. Y12 provides a ligand contact to a carbohydrate. The Mn(2+) site is built by D19, H24, and S34. Residue 99-100 participates in a carbohydrate binding; the sequence is LY. A Ca(2+)-binding site is contributed by D208. R228 is a binding site for a carbohydrate.

This sequence belongs to the leguminous lectin family. As to quaternary structure, equilibrium between homodimer and homotetramer. Oligomerization is pH-dependent with homotetramers forming at pH 6.5 and above. In terms of processing, the beta and gamma chains are produced by partial proteolytic processing of the lectin alpha chain by an asparaginyl endopeptidase. Mixture of 60% alpha lectin and 40% of its beta and gamma proteolytic fragments.

D-mannose/D-glucose-binding lectin. Has anti-inflammatory activity in rats. Induces histamine release in mast cells from rat. Induces lymphocyte proliferation and IFNG production. This Dioclea guianensis protein is Lectin alpha chain.